The following is a 155-amino-acid chain: HTH-type transcriptional regulator IscR (155 aa).

Positions 2-136 (KLSTKGRYAM…HQTRLSDIIK (135 aa)) constitute an HTH rrf2-type domain. A DNA-binding region (H-T-H motif) is located at residues 30 to 53 (LAEVSKRQDISLPYLEQLFVKLRR). The tract at residues 141 to 145 (PCPAV) is heme regulatory motif (HRM). A [2Fe-2S] cluster-binding site is contributed by Cys142.

The cofactor is [2Fe-2S] cluster.

In terms of biological role, regulates the transcription of several operons and genes involved in the biogenesis of Fe-S clusters and Fe-S-containing proteins. Functions as a transcriptional repressor of genes involved in iron metabolism by directly binding to the promoter region of genes preceded by the Iron-Rhodo-box motif. Binds to iscR and hemP promoter regions independently of an Fe-S cluster, but their transcriptional repression is Fe-S cluster-dependent. Seems to activate some target genes in a Fe-S cluster-independent manner. Negatively regulates its own transcription in the presence of iron only. The sequence is that of HTH-type transcriptional regulator IscR from Cereibacter sphaeroides (strain ATCC 17023 / DSM 158 / JCM 6121 / CCUG 31486 / LMG 2827 / NBRC 12203 / NCIMB 8253 / ATH 2.4.1.) (Rhodobacter sphaeroides).